Consider the following 856-residue polypeptide: Glucans biosynthesis glucosyltransferase H (856 aa).

Transmembrane regions (helical) follow at residues Ile144–Met164, Ile198–Met218, Val517–Leu537, Leu574–Trp594, Thr608–Phe628, and Ile691–Gly711.

Belongs to the glycosyltransferase 2 family. OpgH subfamily.

The protein resides in the cell inner membrane. It participates in glycan metabolism; osmoregulated periplasmic glucan (OPG) biosynthesis. In terms of biological role, involved in the biosynthesis of osmoregulated periplasmic glucans (OPGs). This Pseudomonas fluorescens (strain Pf0-1) protein is Glucans biosynthesis glucosyltransferase H.